The sequence spans 599 residues: Elongation factor 4 (599 aa).

One can recognise a tr-type G domain in the interval 5–187; the sequence is SHIRNFSIIA…RLVTTIPAPT (183 aa). Residues 17–22 and 134–137 each bind GTP; these read DHGKST and NKID.

Belongs to the TRAFAC class translation factor GTPase superfamily. Classic translation factor GTPase family. LepA subfamily.

The protein resides in the cell inner membrane. It catalyses the reaction GTP + H2O = GDP + phosphate + H(+). In terms of biological role, required for accurate and efficient protein synthesis under certain stress conditions. May act as a fidelity factor of the translation reaction, by catalyzing a one-codon backward translocation of tRNAs on improperly translocated ribosomes. Back-translocation proceeds from a post-translocation (POST) complex to a pre-translocation (PRE) complex, thus giving elongation factor G a second chance to translocate the tRNAs correctly. Binds to ribosomes in a GTP-dependent manner. The polypeptide is Elongation factor 4 (Pseudomonas fluorescens (strain ATCC BAA-477 / NRRL B-23932 / Pf-5)).